We begin with the raw amino-acid sequence, 389 residues long: Lipid-A-disaccharide synthase (389 aa).

This sequence belongs to the LpxB family.

It carries out the reaction a lipid X + a UDP-2-N,3-O-bis[(3R)-3-hydroxyacyl]-alpha-D-glucosamine = a lipid A disaccharide + UDP + H(+). It participates in bacterial outer membrane biogenesis; LPS lipid A biosynthesis. In terms of biological role, condensation of UDP-2,3-diacylglucosamine and 2,3-diacylglucosamine-1-phosphate to form lipid A disaccharide, a precursor of lipid A, a phosphorylated glycolipid that anchors the lipopolysaccharide to the outer membrane of the cell. The protein is Lipid-A-disaccharide synthase of Verminephrobacter eiseniae (strain EF01-2).